The sequence spans 254 residues: 5'-nucleotidase SurE (254 aa).

Residues Asp8, Asp9, Ser38, and Asn91 each coordinate a divalent metal cation.

The protein belongs to the SurE nucleotidase family. It depends on a divalent metal cation as a cofactor.

The protein resides in the cytoplasm. The catalysed reaction is a ribonucleoside 5'-phosphate + H2O = a ribonucleoside + phosphate. In terms of biological role, nucleotidase that shows phosphatase activity on nucleoside 5'-monophosphates. This Anaeromyxobacter sp. (strain K) protein is 5'-nucleotidase SurE.